Reading from the N-terminus, the 335-residue chain is Biotin synthase (335 aa).

Positions 53-276 constitute a Radical SAM core domain; sequence VEIEGIVSVK…RTILRFAGGR (224 aa). Positions 66, 70, and 73 each coordinate [4Fe-4S] cluster. Cys109, Cys142, Cys201, and Arg271 together coordinate [2Fe-2S] cluster.

The protein belongs to the radical SAM superfamily. Biotin synthase family. As to quaternary structure, homodimer. The cofactor is [4Fe-4S] cluster. Requires [2Fe-2S] cluster as cofactor.

The enzyme catalyses (4R,5S)-dethiobiotin + (sulfur carrier)-SH + 2 reduced [2Fe-2S]-[ferredoxin] + 2 S-adenosyl-L-methionine = (sulfur carrier)-H + biotin + 2 5'-deoxyadenosine + 2 L-methionine + 2 oxidized [2Fe-2S]-[ferredoxin]. It functions in the pathway cofactor biosynthesis; biotin biosynthesis; biotin from 7,8-diaminononanoate: step 2/2. Catalyzes the conversion of dethiobiotin (DTB) to biotin by the insertion of a sulfur atom into dethiobiotin via a radical-based mechanism. In Acidothermus cellulolyticus (strain ATCC 43068 / DSM 8971 / 11B), this protein is Biotin synthase.